We begin with the raw amino-acid sequence, 252 residues long: Neurotrophic factor BDNF precursor form (252 aa).

The first 18 residues, 1–18 (MTILFLTMVISYFGCMKA), serve as a signal peptide directing secretion. The propeptide occupies 19–133 (APMKEANVRG…AANMSMRVRR (115 aa)). The interval 43 to 62 (LESVNGPKAGSRGLTSSSSS) is disordered. Residue N126 is glycosylated (N-linked (GlcNAc...) asparagine). Disulfide bonds link C146–C213, C191–C242, and C201–C244.

It belongs to the NGF-beta family. Monomers and homodimers. Binds to NTRK2/TRKB. Can form heterodimers with other neurotrophin family members, such as NTF3 and NTF4 (in vitro), but the physiological relevance of this is not clear. BDNF precursor form: interacts with the heterodimer formed by NGFR and SORCS2. Mature BDNF has much lower affinity for the heterodimer formed by NGFR and SORCS2. In terms of processing, N-glycosylated and glycosulfated, contrary to mature BDNF. Post-translationally, mature BDNF is produced by proteolytic removal of the propeptide, catalyzed by a FURIN family member. In addition, the precursor form is proteolytically cleaved within the propeptide, but this is not an obligatory intermediate for the production of mature BDNF. Can be converted into mature BDNF by plasmin (PLG). As to expression, brain and central nervous system.

It localises to the secreted. Important signaling molecule that activates signaling cascades downstream of NTRK2. During development, promotes the survival and differentiation of selected neuronal populations of the peripheral and central nervous systems. Participates in axonal growth, pathfinding and in the modulation of dendritic growth and morphology. Major regulator of synaptic transmission and plasticity at adult synapses in many regions of the CNS. The versatility of BDNF is emphasized by its contribution to a range of adaptive neuronal responses including long-term potentiation (LTP), long-term depression (LTD), certain forms of short-term synaptic plasticity, as well as homeostatic regulation of intrinsic neuronal excitability. Its function is as follows. Important signaling molecule that activates signaling cascades downstream of NTRK2. Activates signaling cascades via the heterodimeric receptor formed by NGFR and SORCS2. Signaling via NGFR and SORCS2 plays a role in synaptic plasticity and long-term depression (LTD). Binding to NGFR and SORCS2 promotes neuronal apoptosis. Promotes neuronal growth cone collapse. The protein is Neurotrophic factor BDNF precursor form (BDNF) of Sus scrofa (Pig).